An 89-amino-acid chain; its full sequence is Cell division topological specificity factor (89 aa).

Belongs to the MinE family.

Its function is as follows. Prevents the cell division inhibition by proteins MinC and MinD at internal division sites while permitting inhibition at polar sites. This ensures cell division at the proper site by restricting the formation of a division septum at the midpoint of the long axis of the cell. The chain is Cell division topological specificity factor from Klebsiella pneumoniae subsp. pneumoniae (strain ATCC 700721 / MGH 78578).